Consider the following 466-residue polypeptide: Putative transcription factor bHLH041 (466 aa).

3 disordered regions span residues 108-129 (PANS…SLSP), 194-213 (LTGP…KGRA), and 260-289 (RENA…TQLQ). Residues 120–129 (PSSSSSSLSP) are compositionally biased toward low complexity. Over residues 268–279 (EGSGGSGGGGRY) the composition is skewed to gly residues. The bHLH domain maps to 285–334 (ATQLQHMISERKRREKLNESFQALRSLLPPGTKKDKASVLSIAREQLSSL).

As to quaternary structure, homodimer.

The protein resides in the nucleus. The protein is Putative transcription factor bHLH041 (BHLH41) of Arabidopsis thaliana (Mouse-ear cress).